The primary structure comprises 282 residues: Heme oxygenase 1, chloroplastic (282 aa).

The transit peptide at 1–56 directs the protein to the chloroplast; it reads MASATVVSQIQSLYIIKPRLSPPPPPHRQFRSIYFPTTRLLQQHRFRQMKSVVIVP. Heme b is bound at residue H86.

Belongs to the heme oxygenase family. As to expression, highly expressed in root nodules and, to a lower extent, in leaves, shoots, roots, flowers and pods (at protein level).

The protein localises to the plastid. The protein resides in the chloroplast. The enzyme catalyses heme b + 3 reduced [NADPH--hemoprotein reductase] + 3 O2 = biliverdin IXalpha + CO + Fe(2+) + 3 oxidized [NADPH--hemoprotein reductase] + 3 H2O + H(+). Functionally, key enzyme in the synthesis of the chromophore of the phytochrome family of plant photoreceptors. Catalyzes the opening of the heme ring to form the open-chain tetrapyrrole biliverdin IX with the release of iron and carbon monoxide (CO). Produces specifically the biliverdin IX-alpha isomer. Can form complex with heme, is ferredoxin-dependent and its activity is increased in the presence of ascorbate. May affect the plastid-to-nucleus signaling pathway by perturbing tetrapyrrole synthesis. The plastid-to-nucleus signal plays an important role in the coordinated expression of both nuclear- and chloroplast-localized genes that encode photosynthesis-related proteins. Required for efficient symbiotic nitrogen fixation (SNF) in root nodules. Responsible for heme catabolism in uninfected nodule interstitial cells (UC), preventing superoxide production under stressful conditions (e.g. nitrate exposure and darkness) and catalyzing biliverdin (BV) production in senescing green nodules. The chain is Heme oxygenase 1, chloroplastic from Lotus japonicus (Lotus corniculatus var. japonicus).